A 476-amino-acid chain; its full sequence is Chromosomal replication initiator protein DnaA (476 aa).

Residues 1–87 (MSESSHVGLW…LMYNVLVDKS (87 aa)) are domain I, interacts with DnaA modulators. The segment at 87 to 130 (SSGATVNQESTTRSTAIPQSGLPRVDERKAPGLLRAPAVQDLDP) is domain II. The domain III, AAA+ region stretch occupies residues 131-348 (HLNPNYNFET…GIVISIMAHS (218 aa)). Residues G176, G178, K179, and T180 each coordinate ATP. The segment at 349 to 476 (TIYNKEIDLD…KKRNVSNGER (128 aa)) is domain IV, binds dsDNA.

It belongs to the DnaA family. In terms of assembly, oligomerizes as a right-handed, spiral filament on DNA at oriC.

Its subcellular location is the cytoplasm. Its function is as follows. Plays an essential role in the initiation and regulation of chromosomal replication. ATP-DnaA binds to the origin of replication (oriC) to initiate formation of the DNA replication initiation complex once per cell cycle. Binds the DnaA box (a 9 base pair repeat at the origin) and separates the double-stranded (ds)DNA. Forms a right-handed helical filament on oriC DNA; dsDNA binds to the exterior of the filament while single-stranded (ss)DNA is stabiized in the filament's interior. The ATP-DnaA-oriC complex binds and stabilizes one strand of the AT-rich DNA unwinding element (DUE), permitting loading of DNA polymerase. After initiation quickly degrades to an ADP-DnaA complex that is not apt for DNA replication. Binds acidic phospholipids. This is Chromosomal replication initiator protein DnaA from Bacteroides fragilis (strain YCH46).